A 103-amino-acid chain; its full sequence is Large ribosomal subunit protein bL21 (103 aa).

It belongs to the bacterial ribosomal protein bL21 family. As to quaternary structure, part of the 50S ribosomal subunit. Contacts protein L20.

This protein binds to 23S rRNA in the presence of protein L20. This is Large ribosomal subunit protein bL21 from Heliobacterium modesticaldum (strain ATCC 51547 / Ice1).